The sequence spans 75 residues: Exodeoxyribonuclease 7 small subunit (75 aa).

The protein belongs to the XseB family. Heterooligomer composed of large and small subunits.

The protein localises to the cytoplasm. The enzyme catalyses Exonucleolytic cleavage in either 5'- to 3'- or 3'- to 5'-direction to yield nucleoside 5'-phosphates.. Bidirectionally degrades single-stranded DNA into large acid-insoluble oligonucleotides, which are then degraded further into small acid-soluble oligonucleotides. The protein is Exodeoxyribonuclease 7 small subunit of Chlamydia pneumoniae (Chlamydophila pneumoniae).